Here is a 165-residue protein sequence, read N- to C-terminus: Phosphopantetheine adenylyltransferase (165 aa).

S10 contacts substrate. ATP is bound by residues 10 to 11 and H18; that span reads SF. Substrate is bound by residues K42, T79, and R93. ATP is bound by residues 94–96, E104, and 129–135; these read GLR and VRPITAT.

Belongs to the bacterial CoaD family. As to quaternary structure, homohexamer. Mg(2+) serves as cofactor.

It localises to the cytoplasm. The catalysed reaction is (R)-4'-phosphopantetheine + ATP + H(+) = 3'-dephospho-CoA + diphosphate. Its pathway is cofactor biosynthesis; coenzyme A biosynthesis; CoA from (R)-pantothenate: step 4/5. Reversibly transfers an adenylyl group from ATP to 4'-phosphopantetheine, yielding dephospho-CoA (dPCoA) and pyrophosphate. The protein is Phosphopantetheine adenylyltransferase of Rhodopseudomonas palustris (strain BisA53).